Here is a 146-residue protein sequence, read N- to C-terminus: Large ribosomal subunit protein uL22 (146 aa).

It belongs to the universal ribosomal protein uL22 family. Part of the 50S ribosomal subunit.

Its function is as follows. This protein binds specifically to 23S rRNA; its binding is stimulated by other ribosomal proteins, e.g. L4, L17, and L20. It is important during the early stages of 50S assembly. It makes multiple contacts with different domains of the 23S rRNA in the assembled 50S subunit and ribosome. In terms of biological role, the globular domain of the protein is located near the polypeptide exit tunnel on the outside of the subunit, while an extended beta-hairpin is found that lines the wall of the exit tunnel in the center of the 70S ribosome. In Nocardioides sp. (strain ATCC BAA-499 / JS614), this protein is Large ribosomal subunit protein uL22.